The sequence spans 515 residues: Signal transduction histidine-protein kinase/phosphatase MprB (515 aa).

Residues 1 to 24 lie on the Cytoplasmic side of the membrane; that stretch reads MTLPPQPSRLKPPRNTSSLSLRWR. Residues 25-45 form a helical membrane-spanning segment; sequence VMLLAMSMVAMVVVLMSVAVY. The Extracellular portion of the chain corresponds to 46-165; that stretch reads AVVSRALYDD…TGQVLGRLGT (120 aa). The helical transmembrane segment at 166–186 threads the bilayer; it reads VLLIVGGVGVAVAAIAGGMVA. Positions 187-239 constitute an HAMP domain; it reads RAGLRPVGRLTQAAERVARTDDLRPIPVFGSDELARLTEAFNMMLRALTESRE. Residues 187–515 are Cytoplasmic-facing; sequence RAGLRPVGRL…GKSRSASKEL (329 aa). Residues 247–467 form the Histidine kinase domain; it reads DAGHELRTPL…SFYVMLPGRP (221 aa). Residue histidine 250 is modified to Phosphohistidine; by autocatalysis. Residues 468–515 form a disordered region; the sequence is LTPGGNGTAPVPAAQFDPDMRSAGSRADRRVIKNTETNGKSRSASKEL.

Mg(2+) is required as a cofactor. Mn(2+) serves as cofactor. Autophosphorylated.

Its subcellular location is the cell membrane. It catalyses the reaction ATP + protein L-histidine = ADP + protein N-phospho-L-histidine.. In terms of biological role, member of the two-component regulatory system MprB/MprA which contributes to maintaining a balance among several systems involved in stress resistance and is required for establishment and maintenance of persistent infection in the host. In response to environmental signals MprB acts both as a membrane-associated protein kinase that undergoes autophosphorylation and subsequently transfers the phosphate to MprA, and a protein phosphatase that dephosphorylates phospho-MprA. The protein is Signal transduction histidine-protein kinase/phosphatase MprB (mprB) of Mycobacterium sp. (strain JLS).